The sequence spans 75 residues: MARKETNYESMVSELNEIVKQLENGDLTLEESIKSYENGVKIVNKLYKKLSTLEGKIKVVEDEKEEDFGGYSNEY.

The protein belongs to the XseB family. In terms of assembly, heterooligomer composed of large and small subunits.

It is found in the cytoplasm. The catalysed reaction is Exonucleolytic cleavage in either 5'- to 3'- or 3'- to 5'-direction to yield nucleoside 5'-phosphates.. Its function is as follows. Bidirectionally degrades single-stranded DNA into large acid-insoluble oligonucleotides, which are then degraded further into small acid-soluble oligonucleotides. The protein is Exodeoxyribonuclease 7 small subunit of Clostridium perfringens (strain ATCC 13124 / DSM 756 / JCM 1290 / NCIMB 6125 / NCTC 8237 / Type A).